We begin with the raw amino-acid sequence, 129 residues long: DNA-directed RNA polymerase subunit omega (129 aa).

Positions 76 to 100 are disordered; it reads EVDEPEPEAVPMIASGDSSGGEDSD.

The protein belongs to the RNA polymerase subunit omega family. In terms of assembly, the RNAP catalytic core consists of 2 alpha, 1 beta, 1 beta' and 1 omega subunit. When a sigma factor is associated with the core the holoenzyme is formed, which can initiate transcription.

The catalysed reaction is RNA(n) + a ribonucleoside 5'-triphosphate = RNA(n+1) + diphosphate. In terms of biological role, promotes RNA polymerase assembly. Latches the N- and C-terminal regions of the beta' subunit thereby facilitating its interaction with the beta and alpha subunits. The protein is DNA-directed RNA polymerase subunit omega of Xanthobacter autotrophicus (strain ATCC BAA-1158 / Py2).